Reading from the N-terminus, the 370-residue chain is Putative methylthioribose-1-phosphate isomerase (370 aa).

Substrate contacts are provided by residues 66 to 68, R109, and Q217; that span reads RGA. D258 functions as the Proton donor in the catalytic mechanism. 268–269 lines the substrate pocket; it reads NK.

This sequence belongs to the eIF-2B alpha/beta/delta subunits family. MtnA subfamily.

It catalyses the reaction 5-(methylsulfanyl)-alpha-D-ribose 1-phosphate = 5-(methylsulfanyl)-D-ribulose 1-phosphate. Catalyzes the interconversion of methylthioribose-1-phosphate (MTR-1-P) into methylthioribulose-1-phosphate (MTRu-1-P). The polypeptide is Putative methylthioribose-1-phosphate isomerase (Aeropyrum pernix (strain ATCC 700893 / DSM 11879 / JCM 9820 / NBRC 100138 / K1)).